The primary structure comprises 466 residues: Ribulose bisphosphate carboxylase large chain (466 aa).

Lysine 4 is subject to N6,N6,N6-trimethyllysine. Substrate is bound by residues asparagine 113 and threonine 163. Catalysis depends on lysine 165, which acts as the Proton acceptor. Lysine 167 is a substrate binding site. 3 residues coordinate Mg(2+): lysine 191, aspartate 193, and glutamate 194. Position 191 is an N6-carboxylysine (lysine 191). Histidine 284 (proton acceptor) is an active-site residue. Substrate contacts are provided by arginine 285, histidine 317, and serine 369.

The protein belongs to the RuBisCO large chain family. Type I subfamily. Heterohexadecamer of 8 large chains and 8 small chains; disulfide-linked. The disulfide link is formed within the large subunit homodimers. Mg(2+) serves as cofactor. The disulfide bond which can form in the large chain dimeric partners within the hexadecamer appears to be associated with oxidative stress and protein turnover.

It is found in the plastid. Its subcellular location is the chloroplast. The catalysed reaction is 2 (2R)-3-phosphoglycerate + 2 H(+) = D-ribulose 1,5-bisphosphate + CO2 + H2O. It catalyses the reaction D-ribulose 1,5-bisphosphate + O2 = 2-phosphoglycolate + (2R)-3-phosphoglycerate + 2 H(+). Its function is as follows. RuBisCO catalyzes two reactions: the carboxylation of D-ribulose 1,5-bisphosphate, the primary event in carbon dioxide fixation, as well as the oxidative fragmentation of the pentose substrate in the photorespiration process. Both reactions occur simultaneously and in competition at the same active site. The chain is Ribulose bisphosphate carboxylase large chain from Nelsonia canescens (Blue pussyleaf).